Consider the following 382-residue polypeptide: Mannitol-1-phosphate 5-dehydrogenase (382 aa).

3 to 14 (ALHFGAGNIGRG) serves as a coordination point for NAD(+). At K269 the chain carries N6-acetyllysine.

This sequence belongs to the mannitol dehydrogenase family.

It carries out the reaction D-mannitol 1-phosphate + NAD(+) = beta-D-fructose 6-phosphate + NADH + H(+). The polypeptide is Mannitol-1-phosphate 5-dehydrogenase (Escherichia coli (strain K12 / MC4100 / BW2952)).